A 100-amino-acid polypeptide reads, in one-letter code: Large ribosomal subunit protein bL21 (100 aa).

The protein belongs to the bacterial ribosomal protein bL21 family. As to quaternary structure, part of the 50S ribosomal subunit. Contacts protein L20.

In terms of biological role, this protein binds to 23S rRNA in the presence of protein L20. In Deinococcus deserti (strain DSM 17065 / CIP 109153 / LMG 22923 / VCD115), this protein is Large ribosomal subunit protein bL21.